A 954-amino-acid chain; its full sequence is Glucosidase 2 subunit alpha (954 aa).

The N-terminal stretch at Met1–Thr22 is a signal peptide. N-linked (GlcNAc...) asparagine glycosylation is found at Asn114, Asn126, Asn142, Asn173, and Asn345. Residue Asp537 is the Nucleophile of the active site. Glu540 is an active-site residue. Asp614 functions as the Proton donor in the catalytic mechanism. 6 N-linked (GlcNAc...) asparagine glycosylation sites follow: Asn783, Asn791, Asn867, Asn880, Asn907, and Asn941.

This sequence belongs to the glycosyl hydrolase 31 family. Heterodimer of a catalytic subunit alpha (ROT2) and a subunit beta (GTB1).

The protein resides in the endoplasmic reticulum. The catalysed reaction is N(4)-(alpha-D-Glc-(1-&gt;3)-alpha-D-Man-(1-&gt;2)-alpha-D-Man-(1-&gt;2)-alpha-D-Man-(1-&gt;3)-[alpha-D-Man-(1-&gt;2)-alpha-D-Man-(1-&gt;3)-[alpha-D-Man-(1-&gt;2)-alpha-D-Man-(1-&gt;6)]-alpha-D-Man-(1-&gt;6)]-beta-D-Man-(1-&gt;4)-beta-D-GlcNAc-(1-&gt;4)-beta-D-GlcNAc)-L-asparaginyl-[protein] + H2O = N(4)-(alpha-D-Man-(1-&gt;2)-alpha-D-Man-(1-&gt;2)-alpha-D-Man-(1-&gt;3)-[alpha-D-Man-(1-&gt;2)-alpha-D-Man-(1-&gt;3)-[alpha-D-Man-(1-&gt;2)-alpha-D-Man-(1-&gt;6)]-alpha-D-Man-(1-&gt;6)]-beta-D-Man-(1-&gt;4)-beta-D-GlcNAc-(1-&gt;4)-beta-D-GlcNAc)-L-asparaginyl-[protein] (N-glucan mannose isomer 9A1,2,3B1,2,3) + beta-D-glucose. It catalyses the reaction N(4)-(alpha-D-Glc-(1-&gt;3)-alpha-D-Glc-(1-&gt;3)-alpha-D-Man-(1-&gt;2)-alpha-D-Man-(1-&gt;2)-alpha-D-Man-(1-&gt;3)-[alpha-D-Man-(1-&gt;2)-alpha-D-Man-(1-&gt;3)-[alpha-D-Man-(1-&gt;2)-alpha-D-Man-(1-&gt;6)]-alpha-D-Man-(1-&gt;6)]-beta-D-Man-(1-&gt;4)-beta-D-GlcNAc-(1-&gt;4)-beta-D-GlcNAc)-L-asparaginyl-[protein] + H2O = N(4)-(alpha-D-Glc-(1-&gt;3)-alpha-D-Man-(1-&gt;2)-alpha-D-Man-(1-&gt;2)-alpha-D-Man-(1-&gt;3)-[alpha-D-Man-(1-&gt;2)-alpha-D-Man-(1-&gt;3)-[alpha-D-Man-(1-&gt;2)-alpha-D-Man-(1-&gt;6)]-alpha-D-Man-(1-&gt;6)]-beta-D-Man-(1-&gt;4)-beta-D-GlcNAc-(1-&gt;4)-beta-D-GlcNAc)-L-asparaginyl-[protein] + beta-D-glucose. It functions in the pathway glycan metabolism; N-glycan metabolism. Its activity is regulated as follows. Inhibited by glucose, maltose and nigerose, and by the antibiotic deoxynojirimycin. In terms of biological role, catalytic subunit of glucosidase 2, which cleaves sequentially the 2 innermost alpha-1,3-linked glucose residues from the Glc(2)Man(9)GlcNAc(2) oligosaccharide precursor of immature glycoproteins. The sequence is that of Glucosidase 2 subunit alpha (ROT2) from Saccharomyces cerevisiae (strain ATCC 204508 / S288c) (Baker's yeast).